The chain runs to 245 residues: Uridylate kinase (245 aa).

Position 18-21 (18-21) interacts with ATP; the sequence is KLSG. Gly60 contributes to the UMP binding site. Gly61 and Arg65 together coordinate ATP. UMP contacts are provided by residues Asp80 and 141–148; that span reads TGNPFFTT. ATP is bound by residues Thr168, Tyr174, and Asp177.

This sequence belongs to the UMP kinase family. In terms of assembly, homohexamer.

It is found in the cytoplasm. It catalyses the reaction UMP + ATP = UDP + ADP. It participates in pyrimidine metabolism; CTP biosynthesis via de novo pathway; UDP from UMP (UMPK route): step 1/1. Its activity is regulated as follows. Inhibited by UTP. In terms of biological role, catalyzes the reversible phosphorylation of UMP to UDP. The chain is Uridylate kinase from Pseudomonas paraeruginosa (strain DSM 24068 / PA7) (Pseudomonas aeruginosa (strain PA7)).